Consider the following 477-residue polypeptide: Protoporphyrinogen oxidase (477 aa).

FAD is bound by residues Gly9–Gly14, Trp42, Gly57–Gly60, Val257, Ala449, and Val454–Val456.

It belongs to the protoporphyrinogen/coproporphyrinogen oxidase family. Protoporphyrinogen oxidase subfamily. As to quaternary structure, monomer. Homodimer. FAD is required as a cofactor.

The protein localises to the mitochondrion inner membrane. The catalysed reaction is protoporphyrinogen IX + 3 O2 = protoporphyrin IX + 3 H2O2. Its pathway is porphyrin-containing compound metabolism; protoporphyrin-IX biosynthesis; protoporphyrin-IX from protoporphyrinogen-IX: step 1/1. With respect to regulation, inhibited by acifluorfen. In terms of biological role, catalyzes the 6-electron oxidation of protoporphyrinogen-IX to form protoporphyrin-IX. The protein is Protoporphyrinogen oxidase (Ppox) of Mus musculus (Mouse).